A 155-amino-acid polypeptide reads, in one-letter code: Small ribosomal subunit protein uS7c (155 aa).

Belongs to the universal ribosomal protein uS7 family. As to quaternary structure, part of the 30S ribosomal subunit.

It localises to the plastid. The protein resides in the chloroplast. Functionally, one of the primary rRNA binding proteins, it binds directly to 16S rRNA where it nucleates assembly of the head domain of the 30S subunit. This chain is Small ribosomal subunit protein uS7c (rps7), found in Canella winterana (Wild cinnamon).